The chain runs to 473 residues: Benzoyl-CoA oxygenase component B (473 aa).

Belongs to the benzoyl-CoA oxygenase component B family. In terms of assembly, monomer. The subunit composition of the active BoxA/BoxB protein complex is not known. Fe cation serves as cofactor.

It catalyses the reaction benzoyl-CoA + NADPH + O2 + H(+) = 2,3-epoxy-2,3-dihydrobenzoyl-CoA + NADP(+) + H2O. The BoxA/BoxB complex catalyzes the aerobic reduction/oxygenation of the aromatic ring of benzoyl-CoA to form 2,3-epoxy-2,3-dihydrobenzoyl-CoA. BoxB acts as the benzoyl-CoA oxygenase, after being reduced by the reductase component BoxA. BoxAB does not act on NADH or benzoate. The protein is Benzoyl-CoA oxygenase component B (boxB) of Aromatoleum evansii (Azoarcus evansii).